Reading from the N-terminus, the 386-residue chain is Ribonuclease D (386 aa).

Positions 3–174 constitute a 3'-5' exonuclease domain; sequence HTITTTDELA…EIYEYLSAEL (172 aa). In terms of domain architecture, HRDC spans 213 to 294; the sequence is SGRVVAIAQQ…ARGMSVPNSE (82 aa).

This sequence belongs to the RNase D family. Requires a divalent metal cation as cofactor.

It localises to the cytoplasm. It catalyses the reaction Exonucleolytic cleavage that removes extra residues from the 3'-terminus of tRNA to produce 5'-mononucleotides.. Exonuclease involved in the 3' processing of various precursor tRNAs. Initiates hydrolysis at the 3'-terminus of an RNA molecule and releases 5'-mononucleotides. In Jannaschia sp. (strain CCS1), this protein is Ribonuclease D.